Reading from the N-terminus, the 475-residue chain is Ataxin-10 (475 aa).

At Arg10 the chain carries Omega-N-methylarginine. Ser12 is modified (phosphoserine; by AURKB). Ser77 carries the phosphoserine; by PLK1 modification. Thr82 bears the Phosphothreonine; by PLK1 mark. Ser430 carries the post-translational modification Phosphoserine.

It belongs to the ataxin-10 family. As to quaternary structure, homooligomer. Interacts with GNB2. Interacts with IQCB1. Interacts with OGT. In terms of processing, polyubiquitinated. Phosphorylation at Ser-12 by AURKB promotes the association of ATXN10 with PLK1. Phosphorylation at Ser-77 and Thr-82 by PLK1 may play a role in the regulation of cytokinesis and may stimulate the proteasome-mediated degradation of ATXN10. Expressed in the central nervous system.

Its subcellular location is the cytoplasm. It localises to the perinuclear region. It is found in the midbody. The protein localises to the cytoskeleton. The protein resides in the cilium basal body. Its subcellular location is the microtubule organizing center. It localises to the centrosome. It is found in the centriole. In terms of biological role, may play a role in the regulation of cytokinesis. May play a role in signaling by stimulating protein glycosylation. Induces neuritogenesis by activating the Ras-MAP kinase pathway and is necessary for the survival of cerebellar neurons. Does not appear to play a major role in ciliogenesis. The chain is Ataxin-10 (ATXN10) from Homo sapiens (Human).